The chain runs to 264 residues: Small ribosomal subunit protein uS3 (264 aa).

The KH type-2 domain occupies 39–107 (VREYLKKKLK…PVHVNIEEIR (69 aa)). Positions 217-264 (EEVAEEKRPRRNARPGDRRPRRDGEGAPAGARRGAPRRGGAGDGKTGE) are disordered. The segment covering 230–241 (RPGDRRPRRDGE) has biased composition (basic and acidic residues). Over residues 253 to 264 (RRGGAGDGKTGE) the composition is skewed to gly residues.

It belongs to the universal ribosomal protein uS3 family. Part of the 30S ribosomal subunit. Forms a tight complex with proteins S10 and S14.

Functionally, binds the lower part of the 30S subunit head. Binds mRNA in the 70S ribosome, positioning it for translation. This is Small ribosomal subunit protein uS3 from Paraburkholderia phymatum (strain DSM 17167 / CIP 108236 / LMG 21445 / STM815) (Burkholderia phymatum).